A 315-amino-acid polypeptide reads, in one-letter code: Atrochrysone carboxyl ACP thioesterase (315 aa).

Residues His95, His97, Asp99, and His100 each contribute to the Zn(2+) site. Asp99 acts as the Proton donor/acceptor in catalysis.

Belongs to the metallo-beta-lactamase superfamily. Requires Zn(2+) as cofactor. In terms of tissue distribution, endocrocin is specifically produced in conidia.

The enzyme catalyses atrochrysone carboxyl-[ACP] + H2O = atrochrysone carboxylate + holo-[ACP] + H(+). Atrochrysone carboxyl ACP thioesterase; part of the gene cluster that mediates the biosynthesis of endocrocin, a simple anthraquinone interesting for many biotechnological applications. The pathway begins with the synthesis of atrochrysone thioester by the polyketide synthase (PKS) encA. The atrochrysone carboxyl ACP thioesterase encB then breaks the thioester bond and releases the atrochrysone carboxylic acid from encA. The atrochrysone carboxylic acid is then converted to endocrocin anthrone which is further oxidized into endocrocin by the anthrone oxygenase encC. The exact function of encD has not been identified yet, but it negatively regulates endocrocin production, likely through the modification of endocrocin itself. The sequence is that of Atrochrysone carboxyl ACP thioesterase from Aspergillus fumigatus (strain ATCC MYA-4609 / CBS 101355 / FGSC A1100 / Af293) (Neosartorya fumigata).